We begin with the raw amino-acid sequence, 69 residues long: Conotoxin Lt5.7 (69 aa).

The first 19 residues, methionine 1–proline 19, serve as a signal peptide directing secretion. Residues lysine 20 to alanine 54 constitute a propeptide that is removed on maturation.

It belongs to the conotoxin T superfamily. In terms of processing, contains 2 disulfide bonds that can be either 'C1-C3, C2-C4' or 'C1-C4, C2-C3', since these disulfide connectivities have been observed for conotoxins with cysteine framework V (for examples, see AC P0DQQ7 and AC P81755). In terms of tissue distribution, expressed by the venom duct.

It is found in the secreted. In Conus litteratus (Lettered cone), this protein is Conotoxin Lt5.7.